The primary structure comprises 177 residues: SKP1-like protein 15 (177 aa).

Positions 108–167 (ILAANYLNVEGLLGLTCQTVADYIKDKTPEEVRELFNIENDFTHEEEEEAIRKENAWAFE) are interaction with the F-box domain of F-box proteins.

The protein belongs to the SKP1 family. In terms of assembly, part of a SCF (SKP1-cullin-F-box) protein ligase complex. In terms of tissue distribution, expressed at low levels in seedlings and leaves.

The protein resides in the nucleus. Its pathway is protein modification; protein ubiquitination. Functionally, involved in ubiquitination and subsequent proteasomal degradation of target proteins. Together with CUL1, RBX1 and a F-box protein, it forms a SCF E3 ubiquitin ligase complex. The functional specificity of this complex depends on the type of F-box protein. In the SCF complex, it serves as an adapter that links the F-box protein to CUL1. The polypeptide is SKP1-like protein 15 (ASK15) (Arabidopsis thaliana (Mouse-ear cress)).